The chain runs to 378 residues: Cytochrome b (378 aa).

Transmembrane regions (helical) follow at residues 34–54 (FGSL…FLAM), 78–99 (WLLR…YLHV), 114–134 (WLIG…GYVL), and 179–199 (FFTF…IHLL). The heme b site is built by H84 and H98. Positions 183 and 197 each coordinate heme b. A ubiquinone is bound at residue H202. The next 4 membrane-spanning stretches (helical) occupy residues 227 to 247 (FKDI…VLIS), 289 to 309 (LGGV…PFYN), 321 to 341 (INQV…WIGA), and 348 to 368 (YVLI…VNPL).

This sequence belongs to the cytochrome b family. As to quaternary structure, the main subunits of complex b-c1 are: cytochrome b, cytochrome c1 and the Rieske protein. Heme b is required as a cofactor.

The protein localises to the mitochondrion inner membrane. Functionally, component of the ubiquinol-cytochrome c reductase complex (complex III or cytochrome b-c1 complex) that is part of the mitochondrial respiratory chain. The b-c1 complex mediates electron transfer from ubiquinol to cytochrome c. Contributes to the generation of a proton gradient across the mitochondrial membrane that is then used for ATP synthesis. The protein is Cytochrome b (mt:Cyt-b) of Drosophila mauritiana (Fruit fly).